A 551-amino-acid chain; its full sequence is Putative transport protein HI_0035 (551 aa).

The next 5 helical transmembrane spans lie at 4–24 (IAIT…IGHW), 28–48 (GVGL…HFTN), 65–85 (FGLI…FFSS), 95–115 (AFAI…HKIA), and 157–177 (VSYA…MWLI). RCK C-terminal domains lie at 191-275 (RFNA…IIGH) and 277-360 (VDAP…VIGN). A run of 6 helical transmembrane segments spans residues 370-390 (MLPV…PFYI), 402-424 (AGGP…LYWF), 438-458 (IVLF…DTLV), 463-483 (LEWM…VGTI), 492-512 (YLTI…LAFA), and 529-549 (VYPL…VLLW).

This sequence belongs to the AAE transporter (TC 2.A.81) family. YidE subfamily.

The protein resides in the cell membrane. This Haemophilus influenzae (strain ATCC 51907 / DSM 11121 / KW20 / Rd) protein is Putative transport protein HI_0035.